We begin with the raw amino-acid sequence, 324 residues long: Beta-ketoacyl-[acyl-carrier-protein] synthase III (324 aa).

Active-site residues include Cys-112 and His-249. Residues 250 to 254 (QANRR) are ACP-binding. The active site involves Asn-279.

The protein belongs to the thiolase-like superfamily. FabH family. Homodimer.

Its subcellular location is the cytoplasm. The enzyme catalyses malonyl-[ACP] + acetyl-CoA + H(+) = 3-oxobutanoyl-[ACP] + CO2 + CoA. Its pathway is lipid metabolism; fatty acid biosynthesis. Catalyzes the condensation reaction of fatty acid synthesis by the addition to an acyl acceptor of two carbons from malonyl-ACP. Catalyzes the first condensation reaction which initiates fatty acid synthesis and may therefore play a role in governing the total rate of fatty acid production. Possesses both acetoacetyl-ACP synthase and acetyl transacylase activities. Its substrate specificity determines the biosynthesis of branched-chain and/or straight-chain of fatty acids. The chain is Beta-ketoacyl-[acyl-carrier-protein] synthase III from Streptococcus equi subsp. zooepidemicus (strain H70).